The chain runs to 707 residues: Elongation factor G (707 aa).

The tr-type G domain maps to 8–288; it reads QFTRNIGIMA…AVCKFLPSPA (281 aa). GTP-binding positions include 17–24, 85–89, and 139–142; these read AHIDAGKT, DTPGH, and NKMD. Residues 288–308 form a disordered region; sequence ADTPTVEGTDPSDPNKVIERK.

It belongs to the TRAFAC class translation factor GTPase superfamily. Classic translation factor GTPase family. EF-G/EF-2 subfamily.

The protein localises to the cytoplasm. In terms of biological role, catalyzes the GTP-dependent ribosomal translocation step during translation elongation. During this step, the ribosome changes from the pre-translocational (PRE) to the post-translocational (POST) state as the newly formed A-site-bound peptidyl-tRNA and P-site-bound deacylated tRNA move to the P and E sites, respectively. Catalyzes the coordinated movement of the two tRNA molecules, the mRNA and conformational changes in the ribosome. This is Elongation factor G from Porphyromonas gingivalis (strain ATCC 33277 / DSM 20709 / CIP 103683 / JCM 12257 / NCTC 11834 / 2561).